The following is a 660-amino-acid chain: Bifunctional polymyxin resistance protein ArnA (660 aa).

The interval 1–304 (MKTVVFAYHD…TLGLVQGSRL (304 aa)) is formyltransferase ArnAFT. 86 to 88 (HLI) is a binding site for (6R)-10-formyltetrahydrofolate. His104 acts as the Proton donor; for formyltransferase activity in catalysis. (6R)-10-formyltetrahydrofolate is bound by residues Arg114 and 136–140 (VKRAD). Residues 314–660 (RRTRVLILGV…RTVDLTDKPS (347 aa)) are dehydrogenase ArnADH. NAD(+)-binding positions include Asp347 and 368–369 (DI). UDP-alpha-D-glucuronate is bound by residues Ala393, Tyr398, and 432 to 433 (TS). Glu434 serves as the catalytic Proton acceptor; for decarboxylase activity. UDP-alpha-D-glucuronate-binding positions include Arg460, Asn492, 526–535 (KLIDGGKQKR), and Tyr613. Arg619 functions as the Proton donor; for decarboxylase activity in the catalytic mechanism.

The protein in the N-terminal section; belongs to the Fmt family. UDP-L-Ara4N formyltransferase subfamily. This sequence in the C-terminal section; belongs to the NAD(P)-dependent epimerase/dehydratase family. UDP-glucuronic acid decarboxylase subfamily. In terms of assembly, homohexamer, formed by a dimer of trimers.

The enzyme catalyses UDP-alpha-D-glucuronate + NAD(+) = UDP-beta-L-threo-pentopyranos-4-ulose + CO2 + NADH. The catalysed reaction is UDP-4-amino-4-deoxy-beta-L-arabinose + (6R)-10-formyltetrahydrofolate = UDP-4-deoxy-4-formamido-beta-L-arabinose + (6S)-5,6,7,8-tetrahydrofolate + H(+). It participates in nucleotide-sugar biosynthesis; UDP-4-deoxy-4-formamido-beta-L-arabinose biosynthesis; UDP-4-deoxy-4-formamido-beta-L-arabinose from UDP-alpha-D-glucuronate: step 1/3. It functions in the pathway nucleotide-sugar biosynthesis; UDP-4-deoxy-4-formamido-beta-L-arabinose biosynthesis; UDP-4-deoxy-4-formamido-beta-L-arabinose from UDP-alpha-D-glucuronate: step 3/3. Its pathway is bacterial outer membrane biogenesis; lipopolysaccharide biosynthesis. Its function is as follows. Bifunctional enzyme that catalyzes the oxidative decarboxylation of UDP-glucuronic acid (UDP-GlcUA) to UDP-4-keto-arabinose (UDP-Ara4O) and the addition of a formyl group to UDP-4-amino-4-deoxy-L-arabinose (UDP-L-Ara4N) to form UDP-L-4-formamido-arabinose (UDP-L-Ara4FN). The modified arabinose is attached to lipid A and is required for resistance to polymyxin and cationic antimicrobial peptides. This is Bifunctional polymyxin resistance protein ArnA from Shigella boydii serotype 4 (strain Sb227).